A 202-amino-acid polypeptide reads, in one-letter code: dITP/XTP pyrophosphatase (202 aa).

10–15 (TSNRHK) contacts substrate. The active-site Proton acceptor is the aspartate 70. Aspartate 70 lines the Mg(2+) pocket. Substrate is bound by residues serine 71, 153-156 (FGYD), lysine 176, and 181-182 (HR).

Belongs to the HAM1 NTPase family. Homodimer. Mg(2+) is required as a cofactor.

The catalysed reaction is XTP + H2O = XMP + diphosphate + H(+). It carries out the reaction dITP + H2O = dIMP + diphosphate + H(+). The enzyme catalyses ITP + H2O = IMP + diphosphate + H(+). Functionally, pyrophosphatase that catalyzes the hydrolysis of nucleoside triphosphates to their monophosphate derivatives, with a high preference for the non-canonical purine nucleotides XTP (xanthosine triphosphate), dITP (deoxyinosine triphosphate) and ITP. Seems to function as a house-cleaning enzyme that removes non-canonical purine nucleotides from the nucleotide pool, thus preventing their incorporation into DNA/RNA and avoiding chromosomal lesions. The chain is dITP/XTP pyrophosphatase from Methylacidiphilum infernorum (isolate V4) (Methylokorus infernorum (strain V4)).